A 422-amino-acid chain; its full sequence is UDP-N-acetylglucosamine 1-carboxyvinyltransferase (422 aa).

A phosphoenolpyruvate-binding site is contributed by 22–23; sequence KN. Arg-92 is a binding site for UDP-N-acetyl-alpha-D-glucosamine. Catalysis depends on Cys-116, which acts as the Proton donor. Residue Cys-116 is modified to 2-(S-cysteinyl)pyruvic acid O-phosphothioketal. UDP-N-acetyl-alpha-D-glucosamine contacts are provided by residues 121 to 125, Asp-307, and Leu-329; that span reads RPIDL.

It belongs to the EPSP synthase family. MurA subfamily.

It is found in the cytoplasm. It carries out the reaction phosphoenolpyruvate + UDP-N-acetyl-alpha-D-glucosamine = UDP-N-acetyl-3-O-(1-carboxyvinyl)-alpha-D-glucosamine + phosphate. Its pathway is cell wall biogenesis; peptidoglycan biosynthesis. Functionally, cell wall formation. Adds enolpyruvyl to UDP-N-acetylglucosamine. This chain is UDP-N-acetylglucosamine 1-carboxyvinyltransferase, found in Sulfurovum sp. (strain NBC37-1).